A 394-amino-acid chain; its full sequence is Elongation factor Tu (394 aa).

Residues 10-205 (KPHMNVGTIG…SMDNYFDLPE (196 aa)) form the tr-type G domain. Positions 19–26 (GHVDHGKT) are G1. Residue 19 to 26 (GHVDHGKT) participates in GTP binding. Residue threonine 26 participates in Mg(2+) binding. The segment at 61–65 (GITIN) is G2. The interval 82–85 (DCPG) is G3. GTP contacts are provided by residues 82 to 86 (DCPGH) and 137 to 140 (NKLD). The tract at residues 137-140 (NKLD) is G4. Positions 173-175 (SAF) are G5.

It belongs to the TRAFAC class translation factor GTPase superfamily. Classic translation factor GTPase family. EF-Tu/EF-1A subfamily. Monomer.

The protein resides in the cytoplasm. The enzyme catalyses GTP + H2O = GDP + phosphate + H(+). GTP hydrolase that promotes the GTP-dependent binding of aminoacyl-tRNA to the A-site of ribosomes during protein biosynthesis. In Borreliella afzelii (strain PKo) (Borrelia afzelii), this protein is Elongation factor Tu.